The following is a 626-amino-acid chain: Carnitine O-acetyltransferase (626 aa).

N6-succinyllysine is present on Lys93. Lys261 carries the post-translational modification N6-acetyllysine; alternate. Lys261 bears the N6-succinyllysine; alternate mark. The residue at position 268 (Lys268) is an N6-acetyllysine. The active-site Proton acceptor is His343. CoA is bound by residues Lys419 and 423–430; that span reads KSQKLSPD. The (R)-carnitine site is built by Tyr452 and Ser454. Ser456 contacts CoA. (R)-carnitine is bound at residue Thr465. Residues Arg504 and Gln555 each contribute to the CoA site. A Microbody targeting signal motif is present at residues 624 to 626; it reads AKL.

Belongs to the carnitine/choline acetyltransferase family. As to quaternary structure, monomer. In terms of tissue distribution, expressed in flagella of epididymal sperm.

The protein localises to the endoplasmic reticulum. Its subcellular location is the peroxisome. It localises to the mitochondrion inner membrane. The enzyme catalyses (R)-carnitine + acetyl-CoA = O-acetyl-(R)-carnitine + CoA. The catalysed reaction is propanoyl-CoA + (R)-carnitine = O-propanoyl-(R)-carnitine + CoA. It carries out the reaction butanoyl-CoA + (R)-carnitine = O-butanoyl-(R)-carnitine + CoA. It catalyses the reaction hexanoyl-CoA + (R)-carnitine = O-hexanoyl-(R)-carnitine + CoA. The enzyme catalyses octanoyl-CoA + (R)-carnitine = O-octanoyl-(R)-carnitine + CoA. The catalysed reaction is decanoyl-CoA + (R)-carnitine = O-decanoyl-(R)-carnitine + CoA. It carries out the reaction 3-methylbutanoyl-CoA + (R)-carnitine = O-3-methylbutanoyl-(R)-carnitine + CoA. It catalyses the reaction 2-methylpropanoyl-CoA + (R)-carnitine = O-isobutanoyl-(R)-carnitine + CoA. The enzyme catalyses 2-methylbutanoyl-CoA + (R)-carnitine = O-2-methylbutanoyl-(R)-carnitine + CoA. The catalysed reaction is acetoacetyl-CoA + (R)-carnitine = O-3-oxobutanoyl-(R)-carnitine + CoA. It carries out the reaction 3-hydroxybutanoyl-CoA + (R)-carnitine = O-3-hydroxybutanoyl-(R)-carnitine + CoA. It catalyses the reaction 4,8-dimethylnonanoyl-CoA + (R)-carnitine = O-4,8-dimethylnonanoyl-(R)-carnitine + CoA. The enzyme catalyses 2,6-dimethylheptanoyl-CoA + (R)-carnitine = O-2,6-dimethylheptanoyl-(R)-carnitine + CoA. In terms of biological role, catalyzes the reversible transfer of acyl groups from carnitine to coenzyme A (CoA) and regulates the acyl-CoA/CoA ratio. Also plays a crucial role in the transport of fatty acids for beta-oxidation. Responsible for the synthesis of short- and branched-chain acylcarnitines. Active towards some branched-chain amino acid oxidation pathway (BCAAO) intermediates. Trans-2-enoyl-CoAs and 2-methylacyl-CoAs are poor substrates. This is Carnitine O-acetyltransferase from Rattus norvegicus (Rat).